Consider the following 317-residue polypeptide: Spermidine synthase 2 (317 aa).

The PABS domain maps to 27–264; it reads PGWFSEISPL…GMIGFMLCST (238 aa). Glutamine 58 serves as a coordination point for S-adenosyl 3-(methylsulfanyl)propylamine. Tyrosine 88 contributes to the putrescine binding site. Residues glutamine 89, aspartate 113, glutamate 133, 164 to 165, and aspartate 183 contribute to the S-adenosyl 3-(methylsulfanyl)propylamine site; that span reads DG. The active-site Proton acceptor is aspartate 183. Putrescine contacts are provided by residues 183-186 and tyrosine 252; that span reads DSSD.

The protein belongs to the spermidine/spermine synthase family.

The enzyme catalyses S-adenosyl 3-(methylsulfanyl)propylamine + putrescine = S-methyl-5'-thioadenosine + spermidine + H(+). Its pathway is amine and polyamine biosynthesis; spermidine biosynthesis; spermidine from putrescine: step 1/1. The polypeptide is Spermidine synthase 2 (Datura stramonium (Jimsonweed)).